Here is a 268-residue protein sequence, read N- to C-terminus: Thiazole synthase (268 aa).

Lys-96 acts as the Schiff-base intermediate with DXP in catalysis. 1-deoxy-D-xylulose 5-phosphate contacts are provided by residues Gly-157, 185-186 (AG), and 207-208 (NT). The disordered stretch occupies residues 238–268 (PMRPREAASPSSPVEGVPFTPTGPRPGRGPQ). The segment covering 258 to 268 (PTGPRPGRGPQ) has biased composition (pro residues).

This sequence belongs to the ThiG family. As to quaternary structure, homotetramer. Forms heterodimers with either ThiH or ThiS.

Its subcellular location is the cytoplasm. The enzyme catalyses [ThiS sulfur-carrier protein]-C-terminal-Gly-aminoethanethioate + 2-iminoacetate + 1-deoxy-D-xylulose 5-phosphate = [ThiS sulfur-carrier protein]-C-terminal Gly-Gly + 2-[(2R,5Z)-2-carboxy-4-methylthiazol-5(2H)-ylidene]ethyl phosphate + 2 H2O + H(+). It functions in the pathway cofactor biosynthesis; thiamine diphosphate biosynthesis. Its function is as follows. Catalyzes the rearrangement of 1-deoxy-D-xylulose 5-phosphate (DXP) to produce the thiazole phosphate moiety of thiamine. Sulfur is provided by the thiocarboxylate moiety of the carrier protein ThiS. In vitro, sulfur can be provided by H(2)S. The chain is Thiazole synthase from Thermus thermophilus (strain ATCC 27634 / DSM 579 / HB8).